The following is a 359-amino-acid chain: DNA integrity scanning protein DisA (359 aa).

The DAC domain occupies 7–146; that stretch reads DEVLRQTLAI…NRRYVLEGSD (140 aa). ATP is bound by residues glycine 74, leucine 92, and 105–109; that span reads TRHRT.

It belongs to the DisA family. Homooctamer. It depends on Mg(2+) as a cofactor.

The catalysed reaction is 2 ATP = 3',3'-c-di-AMP + 2 diphosphate. Functionally, participates in a DNA-damage check-point. DisA forms globular foci that rapidly scan along the chromosomes searching for lesions. Its function is as follows. Also has diadenylate cyclase activity, catalyzing the condensation of 2 ATP molecules into cyclic di-AMP (c-di-AMP). c-di-AMP likely acts as a signaling molecule that may couple DNA integrity with a cellular process. This is DNA integrity scanning protein DisA from Kineococcus radiotolerans (strain ATCC BAA-149 / DSM 14245 / SRS30216).